The sequence spans 225 residues: Type II restriction enzyme BslI subunit alpha (225 aa).

2 consecutive C4-type zinc fingers follow at residues 36-53 (CKDC…CYFC) and 63-84 (CNSC…TDGC).

In terms of assembly, heterotetramer of two alpha and two beta subunits. The alpha subunit is believed to be responsible for DNA recognition, while the beta subunit is thought to mediate cleavage. Zn(2+) is required as a cofactor.

The enzyme catalyses Endonucleolytic cleavage of DNA to give specific double-stranded fragments with terminal 5'-phosphates.. Functionally, a P subtype restriction enzyme that recognizes the double-stranded sequence 5'-CCN(7)GG-3' and cleaves after N-7. In Bacillus sp. (strain NEB-606), this protein is Type II restriction enzyme BslI subunit alpha.